The following is a 145-amino-acid chain: 3-dehydroquinate dehydratase (145 aa).

Tyrosine 22 serves as the catalytic Proton acceptor. Substrate is bound by residues asparagine 73, histidine 79, and aspartate 86. The active-site Proton donor is the histidine 99. Residues 100 to 101 (LS) and arginine 110 contribute to the substrate site.

It belongs to the type-II 3-dehydroquinase family. Homododecamer.

It carries out the reaction 3-dehydroquinate = 3-dehydroshikimate + H2O. It participates in metabolic intermediate biosynthesis; chorismate biosynthesis; chorismate from D-erythrose 4-phosphate and phosphoenolpyruvate: step 3/7. In terms of biological role, catalyzes a trans-dehydration via an enolate intermediate. This chain is 3-dehydroquinate dehydratase, found in Prochlorococcus marinus (strain NATL1A).